We begin with the raw amino-acid sequence, 84 residues long: Large ribosomal subunit protein bL27 (84 aa).

Residues 1–24 form a disordered region; it reads MAHKKGAASTKNGRDSNSQRLGVK. Positions 9–20 are enriched in polar residues; sequence STKNGRDSNSQR.

The protein belongs to the bacterial ribosomal protein bL27 family.

The protein is Large ribosomal subunit protein bL27 of Nocardioides sp. (strain ATCC BAA-499 / JS614).